Reading from the N-terminus, the 178-residue chain is Large ribosomal subunit protein uL6 (178 aa).

The protein belongs to the universal ribosomal protein uL6 family. In terms of assembly, part of the 50S ribosomal subunit.

This protein binds to the 23S rRNA, and is important in its secondary structure. It is located near the subunit interface in the base of the L7/L12 stalk, and near the tRNA binding site of the peptidyltransferase center. The sequence is that of Large ribosomal subunit protein uL6 from Corynebacterium jeikeium (strain K411).